Consider the following 81-residue polypeptide: Dermaseptin-B7 (81 aa).

The N-terminal stretch at 1-22 is a signal peptide; it reads MASLKKSLFLVLFLGLVSLSIC. A propeptide spanning residues 23 to 44 is cleaved from the precursor; it reads EEEKRENEDEEEQEDDEQSEMK. A disordered region spans residues 24–48; sequence EEKRENEDEEEQEDDEQSEMKRGLW. Acidic residues predominate over residues 30-40; sequence EDEEEQEDDEQ. Residue Val78 is modified to Valine amide. A propeptide spanning residues 80–81 is cleaved from the precursor; that stretch reads EQ.

Belongs to the frog skin active peptide (FSAP) family. Dermaseptin subfamily. In terms of tissue distribution, expressed by the skin glands.

Its subcellular location is the secreted. Functionally, has antimicrobial activity. The polypeptide is Dermaseptin-B7 (DRG1) (Phyllomedusa bicolor (Two-colored leaf frog)).